Reading from the N-terminus, the 399-residue chain is Acetate kinase (399 aa).

N9 serves as a coordination point for Mg(2+). K16 contacts ATP. R90 lines the substrate pocket. D147 functions as the Proton donor/acceptor in the catalytic mechanism. ATP contacts are provided by residues 207-211 (HIGNG), 282-284 (DLR), and 330-334 (GVGEN). Mg(2+) is bound at residue E384.

The protein belongs to the acetokinase family. In terms of assembly, homodimer. Requires Mg(2+) as cofactor. The cofactor is Mn(2+).

It localises to the cytoplasm. The enzyme catalyses acetate + ATP = acetyl phosphate + ADP. It participates in metabolic intermediate biosynthesis; acetyl-CoA biosynthesis; acetyl-CoA from acetate: step 1/2. Catalyzes the formation of acetyl phosphate from acetate and ATP. Can also catalyze the reverse reaction. This Staphylococcus saprophyticus subsp. saprophyticus (strain ATCC 15305 / DSM 20229 / NCIMB 8711 / NCTC 7292 / S-41) protein is Acetate kinase.